The chain runs to 63 residues: Large ribosomal subunit protein bL28 (63 aa).

It belongs to the bacterial ribosomal protein bL28 family.

This is Large ribosomal subunit protein bL28 from Geotalea daltonii (strain DSM 22248 / JCM 15807 / FRC-32) (Geobacter daltonii).